The following is a 710-amino-acid chain: Amyloid beta precursor protein binding family B member 1 (710 aa).

Residues 1–15 (MSVPSSLSQSAINAN) are compositionally biased toward polar residues. 4 disordered regions span residues 1–24 (MSVP…ALSL), 131–254 (GLRG…TDSD), 276–299 (GTTQ…EESQ), and 340–365 (TFPA…NTNP). Over residues 145–173 (GPDEGEEKAAGEAEEEEEDDDDEEEEEDL) the composition is skewed to acidic residues. Lys204 carries the N6-acetyllysine modification. Residues 223-234 (SWATLSQGSPSY) show a composition bias toward polar residues. A WW domain is found at 253-285 (SDLPAGWMRVQDTSGTYYWHIPTGTTQWEPPGR). The span at 287–299 (SPSQGSSPQEESQ) shows a compositional bias: low complexity. The 140-residue stretch at 370–509 (FAVRSLGWVE…SKIMAERRNA (140 aa)) folds into the PID 1 domain. Ser459 is subject to Phosphoserine; by PKC. Ser517 bears the Phosphoserine mark. A PID 2 domain is found at 542-699 (KFQVYYLGNV…RRGVQSLWGS (158 aa)). Tyr547 is modified (phosphotyrosine; by ABL1). The residue at position 610 (Ser610) is a Phosphoserine; by SGK1. Position 701 is an N6-acetyllysine (Lys701).

In terms of assembly, component of a complex, at least composed of APBB1, RASD1/DEXRAS1 and APP. Interacts (via PID domain 2) with APP (with the intracellular domain of the amyloid-beta precursor protein). Interacts (via PID domain 2) with RASD1/DEXRAS1; impairs the transcription activation activity. Interacts (via PID domain 1) with KAT5/TIP60. Interacts (via the WW domain) with the proline-rich region of APBB1IP. Interacts with TSHZ1 and TSHZ2. Interacts (via the WW domain) with histone H2AX (when phosphorylated on 'Tyr-142') and the proline-rich region of ENAH. Interacts with MAPK8. Interacts (via PID domain 1) with TSHZ3 (via homeobox domain). Interacts with SET. Found in a trimeric complex with HDAC1 and TSHZ3; the interaction between HDAC1 and APBB1 is mediated by TSHZ3. Interacts (via WWW domain) with NEK6. Interacts (via WWW domain) with ABL1. Interacts with RNF157. Interacts with ARF6. Post-translationally, phosphorylation at Ser-610 by SGK1 promotes its localization to the nucleus. Phosphorylated following nuclear translocation. Phosphorylation at Tyr-547 by ABL1 enhances transcriptional activation activity and reduces the affinity for RASD1/DEXRAS1. Phosphorylated at Ser-459 by PKC upon insulin activation. In terms of processing, acetylation at Lys-204 and Lys-701 by KAT5 promotes its transcription activator activity. Polyubiquitination by RNF157 leads to degradation by the proteasome. In terms of tissue distribution, highly expressed in brain; strongly reduced in post-mortem elderly subjects with Alzheimer disease. Expressed preferentially in the brain.

Its subcellular location is the cell membrane. It is found in the cytoplasm. The protein localises to the nucleus. The protein resides in the cell projection. It localises to the growth cone. Its subcellular location is the nucleus speckle. Transcription coregulator that can have both coactivator and corepressor functions. Adapter protein that forms a transcriptionally active complex with the gamma-secretase-derived amyloid precursor protein (APP) intracellular domain. Plays a central role in the response to DNA damage by translocating to the nucleus and inducing apoptosis. May act by specifically recognizing and binding histone H2AX phosphorylated on 'Tyr-142' (H2AXY142ph) at double-strand breaks (DSBs), recruiting other pro-apoptosis factors such as MAPK8/JNK1. Required for histone H4 acetylation at double-strand breaks (DSBs). Its ability to specifically bind modified histones and chromatin modifying enzymes such as KAT5/TIP60, probably explains its transcription activation activity. Functions in association with TSHZ3, SET and HDAC factors as a transcriptional repressor, that inhibits the expression of CASP4. Associates with chromatin in a region surrounding the CASP4 transcriptional start site(s). Involved in hippocampal neurite branching and neuromuscular junction formation, as a result plays a role in spatial memory functioning. Plays a role in the maintenance of lens transparency. May play a role in muscle cell strength. Acts as a molecular adapter that functions in neurite outgrowth by activating the RAC1-ARF6 axis upon insulin treatment. This is Amyloid beta precursor protein binding family B member 1 from Homo sapiens (Human).